Here is a 784-residue protein sequence, read N- to C-terminus: DNA repair and recombination protein RAD54-like (784 aa).

Positions 2-9 (RRSLAPSQ) are required for chromatin remodeling, strand pairing activities and coupling of ATPase activity. The residue at position 22 (T22) is a Phosphothreonine. In terms of domain architecture, Helicase ATP-binding spans 169 to 344 (EGKKGNFNGC…FSLVNFVNPE (176 aa)). 182 to 189 (DEMGLGKT) contacts ATP. The DEGH box signature appears at 295-298 (DEGH). One can recognise a Helicase C-terminal domain in the interval 501 to 658 (LLDFMLATIR…NNESAEKHFT (158 aa)). A disordered region spans residues 742-784 (QAIKESEETKQEAEDTSIPAKSKRKRSTTPESDDCNDEDFKGF). Positions 745-754 (KESEETKQEA) are enriched in basic and acidic residues.

Belongs to the SNF2/RAD54 helicase family. Interacts (via N-terminus) with spn-A/Rad51.

Its subcellular location is the nucleus. Its function is as follows. Involved in mitotic DNA repair and meiotic recombination. Functions in the recombinational DNA repair pathway. Essential for interhomolog gene conversion (GC), but may have a less important role in intersister GC than spn-A/Rad51. In the presence of DNA, spn-A/Rad51 enhances the ATPase activity of okr/Rad54. This Drosophila willistoni (Fruit fly) protein is DNA repair and recombination protein RAD54-like.